Consider the following 957-residue polypeptide: Dystrophin-related protein 2 (957 aa).

2 Spectrin repeats span residues 102–179 (DLSG…EELE) and 231–337 (EHLL…QLQD). The WW domain occupies 358 to 383 (WERAISPNKVPYYINHQAQTTCWDHP). The ZZ-type; degenerate zinc-finger motif lies at 605 to 661 (KHQTKCSICRQCPIKGFRYRSLKQFNVDICQTCFLTGRASKGNKLHYPIMEYYTPTT). The Zn(2+) site is built by Cys-610, Cys-613, Cys-634, and Cys-637. Ser-748 bears the Phosphoserine mark. Positions 876–894 (QPPSESDGNGSAGSSLASS) are enriched in low complexity. The segment at 876–923 (QPPSESDGNGSAGSSLASSPRQSEGSHPREKGQTTPDTEVADDVGSKS) is disordered. Thr-910 is subject to Phosphothreonine.

As to quaternary structure, interacts with PRX; this enhances phosphorylation. Identified in a dystroglycan complex that contains at least PRX, DRP2, UTRN, DMD and DAG1. As to expression, detected in quadriceps nerve Schwann cells. Detected in sciatic nerve. Detected in trigeminal nerve Schwann cells (at protein level). Detected in brain and spinal cord.

It localises to the postsynaptic density. It is found in the cell projection. Its subcellular location is the dendrite. The protein localises to the perikaryon. The protein resides in the cell membrane. Its function is as follows. Required for normal myelination and for normal organization of the cytoplasm and the formation of Cajal bands in myelinating Schwann cells. Required for normal PRX location at appositions between the abaxonal surface of the myelin sheath and the Schwann cell plasma membrane. Possibly involved in membrane-cytoskeleton interactions of the central nervous system. This chain is Dystrophin-related protein 2 (Drp2), found in Mus musculus (Mouse).